The following is a 457-amino-acid chain: Argininosuccinate lyase (457 aa).

Belongs to the lyase 1 family. Argininosuccinate lyase subfamily.

It is found in the cytoplasm. The enzyme catalyses 2-(N(omega)-L-arginino)succinate = fumarate + L-arginine. The protein operates within amino-acid biosynthesis; L-arginine biosynthesis; L-arginine from L-ornithine and carbamoyl phosphate: step 3/3. In Psychrobacter cryohalolentis (strain ATCC BAA-1226 / DSM 17306 / VKM B-2378 / K5), this protein is Argininosuccinate lyase.